The primary structure comprises 204 residues: MDINYKLYLITDRSFLNGRSLAECVEDAIKGGATLVQVREKNISTRDFYNIAREVQEVTTKYNVPLLINDRIDIALAINADGVHLGQSDMPIELARKILGDDKVIGISAGNVKEAIEAEKAGADYVGLGTVFFTGTKKDIDEPIGLAGLKEITEKITIPSVAIGGINKENAKSVLATGVDGISVISAILKNDDIQGASKTLANI.

Residues 37 to 41 (QVREK) and Asn-69 each bind 4-amino-2-methyl-5-(diphosphooxymethyl)pyrimidine. Residues Asp-70 and Asp-89 each contribute to the Mg(2+) site. Residue Ser-108 coordinates 4-amino-2-methyl-5-(diphosphooxymethyl)pyrimidine. 134-136 (TGT) is a 2-[(2R,5Z)-2-carboxy-4-methylthiazol-5(2H)-ylidene]ethyl phosphate binding site. Lys-137 contributes to the 4-amino-2-methyl-5-(diphosphooxymethyl)pyrimidine binding site. 2-[(2R,5Z)-2-carboxy-4-methylthiazol-5(2H)-ylidene]ethyl phosphate contacts are provided by residues Gly-165 and 185–186 (IS).

It belongs to the thiamine-phosphate synthase family. Mg(2+) serves as cofactor.

The catalysed reaction is 2-[(2R,5Z)-2-carboxy-4-methylthiazol-5(2H)-ylidene]ethyl phosphate + 4-amino-2-methyl-5-(diphosphooxymethyl)pyrimidine + 2 H(+) = thiamine phosphate + CO2 + diphosphate. It catalyses the reaction 2-(2-carboxy-4-methylthiazol-5-yl)ethyl phosphate + 4-amino-2-methyl-5-(diphosphooxymethyl)pyrimidine + 2 H(+) = thiamine phosphate + CO2 + diphosphate. The enzyme catalyses 4-methyl-5-(2-phosphooxyethyl)-thiazole + 4-amino-2-methyl-5-(diphosphooxymethyl)pyrimidine + H(+) = thiamine phosphate + diphosphate. Its pathway is cofactor biosynthesis; thiamine diphosphate biosynthesis; thiamine phosphate from 4-amino-2-methyl-5-diphosphomethylpyrimidine and 4-methyl-5-(2-phosphoethyl)-thiazole: step 1/1. Condenses 4-methyl-5-(beta-hydroxyethyl)thiazole monophosphate (THZ-P) and 2-methyl-4-amino-5-hydroxymethyl pyrimidine pyrophosphate (HMP-PP) to form thiamine monophosphate (TMP). The protein is Thiamine-phosphate synthase of Clostridium novyi (strain NT).